The following is a 247-amino-acid chain: MIDKKKIAEAFGKAAANYDNFSVIQRIAGNILLSKIETFFNISILDAGCGTGWFSKKWRQLGNTVTALDFSKNMLLTAKNTNSADYYLHADMEQLPICDNIFDLSWSNLSLQWCNKFNKAISELCRVTKPGGMVVFSTIAHGSLYEFNKAYRTINSSYQENKFLSINDIKLSCCNKKTLIDNILITFSFSKILEAMYSFKKIGANYISSNHSKILTKKKIRQLQENWPYNPNGYLLSYRFVFGVIYL.

It belongs to the methyltransferase superfamily.

It catalyses the reaction malonyl-[ACP] + S-adenosyl-L-methionine = malonyl-[ACP] methyl ester + S-adenosyl-L-homocysteine. Its pathway is cofactor biosynthesis; biotin biosynthesis. Converts the free carboxyl group of a malonyl-thioester to its methyl ester by transfer of a methyl group from S-adenosyl-L-methionine (SAM). It allows to synthesize pimeloyl-ACP via the fatty acid synthetic pathway. This chain is Malonyl-[acyl-carrier protein] O-methyltransferase, found in Buchnera aphidicola subsp. Baizongia pistaciae (strain Bp).